We begin with the raw amino-acid sequence, 378 residues long: Erythronate-4-phosphate dehydrogenase (378 aa).

Serine 45 and threonine 66 together coordinate substrate. Positions 146 and 175 each coordinate NAD(+). Arginine 208 is an active-site residue. Residue aspartate 232 coordinates NAD(+). Glutamate 237 is an active-site residue. The active-site Proton donor is the histidine 254. Glycine 257 contributes to the NAD(+) binding site. Position 258 (tyrosine 258) interacts with substrate.

This sequence belongs to the D-isomer specific 2-hydroxyacid dehydrogenase family. PdxB subfamily. As to quaternary structure, homodimer.

The protein resides in the cytoplasm. The enzyme catalyses 4-phospho-D-erythronate + NAD(+) = (R)-3-hydroxy-2-oxo-4-phosphooxybutanoate + NADH + H(+). The protein operates within cofactor biosynthesis; pyridoxine 5'-phosphate biosynthesis; pyridoxine 5'-phosphate from D-erythrose 4-phosphate: step 2/5. Its function is as follows. Catalyzes the oxidation of erythronate-4-phosphate to 3-hydroxy-2-oxo-4-phosphonooxybutanoate. The protein is Erythronate-4-phosphate dehydrogenase of Escherichia coli O6:H1 (strain CFT073 / ATCC 700928 / UPEC).